The sequence spans 257 residues: 5'-nucleotidase SurE (257 aa).

Asp-9, Asp-10, Ser-42, and Asn-96 together coordinate a divalent metal cation.

It belongs to the SurE nucleotidase family. The cofactor is a divalent metal cation.

The protein resides in the cytoplasm. It catalyses the reaction a ribonucleoside 5'-phosphate + H2O = a ribonucleoside + phosphate. Its function is as follows. Nucleotidase that shows phosphatase activity on nucleoside 5'-monophosphates. The chain is 5'-nucleotidase SurE from Campylobacter lari (strain RM2100 / D67 / ATCC BAA-1060).